The sequence spans 496 residues: Lysine--tRNA ligase (496 aa).

Positions 409 and 416 each coordinate Mg(2+).

This sequence belongs to the class-II aminoacyl-tRNA synthetase family. As to quaternary structure, homodimer. The cofactor is Mg(2+).

The protein localises to the cytoplasm. The catalysed reaction is tRNA(Lys) + L-lysine + ATP = L-lysyl-tRNA(Lys) + AMP + diphosphate. In Streptococcus sanguinis (strain SK36), this protein is Lysine--tRNA ligase.